Consider the following 448-residue polypeptide: Ribosomal protein uS12 methylthiotransferase RimO (448 aa).

The region spanning 7–123 (EKVSLVSLGC…IAEIIAEKKQ (117 aa)) is the MTTase N-terminal domain. Cys-16, Cys-52, Cys-86, Cys-161, Cys-165, and Cys-168 together coordinate [4Fe-4S] cluster. A Radical SAM core domain is found at 147–377 (SSPHYTAYLK…MRTQARVSFK (231 aa)). One can recognise a TRAM domain in the interval 380 to 448 (RTLVDSEEDV…DYDLIGEIVD (69 aa)).

The protein belongs to the methylthiotransferase family. RimO subfamily. The cofactor is [4Fe-4S] cluster.

It is found in the cytoplasm. The catalysed reaction is L-aspartate(89)-[ribosomal protein uS12]-hydrogen + (sulfur carrier)-SH + AH2 + 2 S-adenosyl-L-methionine = 3-methylsulfanyl-L-aspartate(89)-[ribosomal protein uS12]-hydrogen + (sulfur carrier)-H + 5'-deoxyadenosine + L-methionine + A + S-adenosyl-L-homocysteine + 2 H(+). Catalyzes the methylthiolation of an aspartic acid residue of ribosomal protein uS12. The chain is Ribosomal protein uS12 methylthiotransferase RimO from Citrifermentans bemidjiense (strain ATCC BAA-1014 / DSM 16622 / JCM 12645 / Bem) (Geobacter bemidjiensis).